A 307-amino-acid chain; its full sequence is DDRGK domain-containing protein 1 (307 aa).

Residues 1-2 are Lumenal-facing; sequence MD. The chain crosses the membrane as a helical span at residues 3-23; sequence LILLVGIATALLLILITLYFL. The Cytoplasmic portion of the chain corresponds to 24 to 307; that stretch reads QSKNAKTETK…TPVAAGESSA (284 aa). The interval 31 to 175 is disordered; sequence ETKAAAQPQR…EADRLAKEER (145 aa). The span at 52-83 shows a compositional bias: low complexity; sequence RRAQIARNQRNRLRQNQNAPAVAAAAAPAAAV. Over residues 107–175 the composition is skewed to basic and acidic residues; that stretch reads LDEKMGAKKR…EADRLAKEER (69 aa).

The protein belongs to the DDRGK1 family. In terms of assembly, interacts with Atg9; the interaction is transient.

It localises to the endoplasmic reticulum membrane. Its function is as follows. Substrate adapter for ufmylation, the covalent attachment of the ubiquitin-like modifier UFM1 to substrate proteins. Required for ufmylation of Atg9; protects the nervous system during aging, possibly by stabilizing Atg9 and supporting its function. This is DDRGK domain-containing protein 1 from Drosophila virilis (Fruit fly).